Here is a 911-residue protein sequence, read N- to C-terminus: Protein translocase subunit SecA (911 aa).

ATP is bound by residues Gln86, 104–108 (GEGKT), and Asp512. Zn(2+)-binding residues include Cys895, Cys897, Cys906, and His907.

The protein belongs to the SecA family. As to quaternary structure, monomer and homodimer. Part of the essential Sec protein translocation apparatus which comprises SecA, SecYEG and auxiliary proteins SecDF-YajC and YidC. Zn(2+) serves as cofactor.

It localises to the cell inner membrane. The protein resides in the cytoplasm. The enzyme catalyses ATP + H2O + cellular proteinSide 1 = ADP + phosphate + cellular proteinSide 2.. Functionally, part of the Sec protein translocase complex. Interacts with the SecYEG preprotein conducting channel. Has a central role in coupling the hydrolysis of ATP to the transfer of proteins into and across the cell membrane, serving both as a receptor for the preprotein-SecB complex and as an ATP-driven molecular motor driving the stepwise translocation of polypeptide chains across the membrane. The polypeptide is Protein translocase subunit SecA (Bordetella bronchiseptica (strain ATCC BAA-588 / NCTC 13252 / RB50) (Alcaligenes bronchisepticus)).